A 190-amino-acid polypeptide reads, in one-letter code: ADP-ribosylation factor F (190 aa).

Residues 34–40 (DGAGKST), 75–79 (DIGGQ), and 136–139 (NKQD) contribute to the GTP site.

Belongs to the small GTPase superfamily. Arf family.

Its subcellular location is the golgi apparatus. Functionally, GTP-binding protein that may be involved in protein trafficking. May modulate vesicle budding and uncoating within the Golgi apparatus. The polypeptide is ADP-ribosylation factor F (arrF) (Dictyostelium discoideum (Social amoeba)).